Here is a 284-residue protein sequence, read N- to C-terminus: 4-diphosphocytidyl-2-C-methyl-D-erythritol kinase (284 aa).

Lys-14 is a catalytic residue. Residue 98–108 coordinates ATP; that stretch reads PMGGGLGGGSS. Asp-140 is a catalytic residue.

Belongs to the GHMP kinase family. IspE subfamily.

The enzyme catalyses 4-CDP-2-C-methyl-D-erythritol + ATP = 4-CDP-2-C-methyl-D-erythritol 2-phosphate + ADP + H(+). The protein operates within isoprenoid biosynthesis; isopentenyl diphosphate biosynthesis via DXP pathway; isopentenyl diphosphate from 1-deoxy-D-xylulose 5-phosphate: step 3/6. Catalyzes the phosphorylation of the position 2 hydroxy group of 4-diphosphocytidyl-2C-methyl-D-erythritol. The chain is 4-diphosphocytidyl-2-C-methyl-D-erythritol kinase from Shewanella putrefaciens (strain CN-32 / ATCC BAA-453).